A 305-amino-acid polypeptide reads, in one-letter code: 2-oxoacid:ferredoxin oxidoreductase subunit beta (305 aa).

[4Fe-4S] cluster is bound by residues Cys12, Cys15, and Cys46. Thiamine diphosphate-binding positions include 44–47 (IGCS) and His65. Residue Asp90 coordinates Mg(2+). 91–92 (GD) is a thiamine diphosphate binding site. The Mg(2+) site is built by Asn118 and Val120. 122-123 (GL) lines the thiamine diphosphate pocket. Position 197 (Cys197) interacts with [4Fe-4S] cluster.

As to quaternary structure, heterodimer composed of an alpha and a beta subunit. [4Fe-4S] cluster serves as cofactor. It depends on thiamine diphosphate as a cofactor. Requires Mg(2+) as cofactor.

It carries out the reaction a 2-oxocarboxylate + 2 oxidized [2Fe-2S]-[ferredoxin] + CoA = an acyl-CoA + 2 reduced [2Fe-2S]-[ferredoxin] + CO2 + H(+). Catalyzes the coenzyme A-dependent oxidative decarboxylation of different 2-oxoacids such as 2-oxoglutarate, pyruvate and 2-oxobutyrate to form their CoA derivatives. This Saccharolobus solfataricus (Sulfolobus solfataricus) protein is 2-oxoacid:ferredoxin oxidoreductase subunit beta.